We begin with the raw amino-acid sequence, 929 residues long: Thrombospondin-3b (929 aa).

An N-terminal signal peptide occupies residues 1-22 (MELRKIVPNLLVLYVAVHFSQS). Residues 24–192 (EIKVINVLEL…VESVKLALGG (169 aa)) form the Laminin G-like domain. The N-linked (GlcNAc...) asparagine glycan is linked to asparagine 45. Disulfide bonds link cysteine 277-cysteine 288, cysteine 282-cysteine 299, cysteine 319-cysteine 343, cysteine 349-cysteine 362, cysteine 356-cysteine 371, cysteine 374-cysteine 386, cysteine 392-cysteine 406, cysteine 400-cysteine 416, cysteine 418-cysteine 429, cysteine 445-cysteine 452, cysteine 457-cysteine 477, cysteine 493-cysteine 513, cysteine 516-cysteine 536, cysteine 552-cysteine 572, cysteine 575-cysteine 595, cysteine 613-cysteine 633, cysteine 653-cysteine 673, and cysteine 689-cysteine 910. The region spanning 345–384 (DIDECAELSGSCVPNSVCINTVGSFKCGQCKAGFVGNQTV) is the EGF-like 1; calcium-binding domain. Asparagine 381 carries N-linked (GlcNAc...) asparagine glycosylation. The EGF-like 2 domain occupies 388 to 430 (ARRTCETLGYSPCDVNSHCVMGRNSDVSCVCNVGWAGNGNICG). 8 TSP type-3 repeats span residues 431-465 (PDSD…NSGQ), 466-501 (EDTD…NKDQ), 502-524 (QNSD…NGDQ), 525-560 (LDTD…NPMQ), 561-583 (TDRD…DPLQ), 584-621 (SDMD…NSSQ), 622-661 (LDSD…NPSQ), and 662-697 (IDTD…EVTM). Residues 602 to 613 (DGDGYQDTRDNC) show a composition bias toward basic and acidic residues. Positions 602-651 (DGDGYQDTRDNCPEVPNSSQLDSDNDGIGDECDDDDDNDGIPDILPPGPD) are disordered. Asparagine 618 carries N-linked (GlcNAc...) asparagine glycosylation. Over residues 624–641 (SDNDGIGDECDDDDDNDG) the composition is skewed to acidic residues. The 215-residue stretch at 701-915 (RAFQTVILDP…LGYRCNDSIP (215 aa)) folds into the TSP C-terminal domain. The N-linked (GlcNAc...) asparagine glycan is linked to asparagine 911.

This sequence belongs to the thrombospondin family. As to quaternary structure, oligomer; disulfide-linked.

Its function is as follows. Adhesive glycoprotein that mediates cell-to-cell and cell-to-matrix interactions. Can bind to fibrinogen, fibronectin, laminin and type V collagen. This is Thrombospondin-3b from Danio rerio (Zebrafish).